A 974-amino-acid chain; its full sequence is RING finger protein nhl-1 (974 aa).

The interval 1-29 (MSSSPQNEAEAREKMRELMSRPPSSRPAD) is disordered. Residues 9 to 19 (AEAREKMRELM) are compositionally biased toward basic and acidic residues. The segment at 43-84 (CPICLDRYKQPKLLPCQHTFCYPCLESCADTLHRNLKCPECR) adopts an RING-type zinc-finger fold. 2 disordered regions span residues 360–395 (VKSD…IRYR) and 416–548 (SLLT…DFPV). Residues 416 to 431 (SLLTTSVTADSSSRTS) show a composition bias toward polar residues. A compositionally biased stretch (basic and acidic residues) spans 437-446 (RVTRSVEPTK). The span at 447–465 (SRPTSLIVPNTETPRTVSP) shows a compositional bias: polar residues. Residues 488-501 (APLPQLPIRKPPLP) are compositionally biased toward pro residues. The segment covering 511 to 528 (LNEKVETIRRAHQQRQDA) has biased composition (basic and acidic residues). The span at 529-538 (SRAASRAVSS) shows a compositional bias: low complexity. 6 NHL repeats span residues 699 to 742 (RAVF…FDKD), 746 to 788 (VRQF…FGLE), 792 to 835 (LFSF…FDKN), 839 to 883 (IAKF…FDPH), 887 to 930 (LFSF…FDAQ), and 934 to 974 (VSSF…IQIF).

As to quaternary structure, interacts with ubc-13.

The chain is RING finger protein nhl-1 from Caenorhabditis elegans.